A 108-amino-acid polypeptide reads, in one-letter code: Acid stress chaperone HdeB (108 aa).

A signal peptide spans 1–29; the sequence is MNISSLRKAFIFMGAVAALSLVNAQSALA. At Lys-93 the chain carries N6-acetyllysine.

The protein belongs to the HdeB family.

It localises to the periplasm. Required for optimal acid stress protection, which is important for survival of enteric bacteria in the acidic environment of the host stomach. Exhibits a chaperone-like activity at acidic pH by preventing the aggregation of many different periplasmic proteins. This chain is Acid stress chaperone HdeB, found in Escherichia coli O6:H1 (strain CFT073 / ATCC 700928 / UPEC).